The sequence spans 407 residues: Aminoacylase-1 (407 aa).

Residue Ala2 is modified to N-acetylalanine. His80 is a binding site for Zn(2+). Asp82 is an active-site residue. Asp113 serves as a coordination point for Zn(2+). Glu147 (proton acceptor) is an active-site residue. Zn(2+) contacts are provided by Glu148, Glu175, and His372.

This sequence belongs to the peptidase M20A family. As to quaternary structure, homodimer. Interacts with SPHK1. Requires Zn(2+) as cofactor.

It localises to the cytoplasm. It carries out the reaction an N-acyl-L-amino acid + H2O = an L-alpha-amino acid + a carboxylate. The enzyme catalyses N-acetyl-L-methionine + H2O = L-methionine + acetate. It catalyses the reaction N-acetyl-L-glutamine + H2O = L-glutamine + acetate. Catalyzes the hydrolysis of N-acetylated amino acids to acetate and free amino acids. The sequence is that of Aminoacylase-1 (ACY1) from Sus scrofa (Pig).